The primary structure comprises 417 residues: Probable secreted beta-glucosidase PSU1 (417 aa).

The first 18 residues, 1–18, serve as a signal peptide directing secretion; the sequence is MRFFETLALALLTTGALA.

The protein belongs to the SUN family.

The protein localises to the secreted. It is found in the cell wall. Functionally, involved in cell wall synthesis. May be required for the activation of 1,3-beta-glucan synthase. This chain is Probable secreted beta-glucosidase PSU1 (psu1), found in Schizosaccharomyces pombe (strain 972 / ATCC 24843) (Fission yeast).